We begin with the raw amino-acid sequence, 577 residues long: Proline--tRNA ligase (577 aa).

Belongs to the class-II aminoacyl-tRNA synthetase family. ProS type 1 subfamily. In terms of assembly, homodimer.

It localises to the cytoplasm. It carries out the reaction tRNA(Pro) + L-proline + ATP = L-prolyl-tRNA(Pro) + AMP + diphosphate. In terms of biological role, catalyzes the attachment of proline to tRNA(Pro) in a two-step reaction: proline is first activated by ATP to form Pro-AMP and then transferred to the acceptor end of tRNA(Pro). As ProRS can inadvertently accommodate and process non-cognate amino acids such as alanine and cysteine, to avoid such errors it has two additional distinct editing activities against alanine. One activity is designated as 'pretransfer' editing and involves the tRNA(Pro)-independent hydrolysis of activated Ala-AMP. The other activity is designated 'posttransfer' editing and involves deacylation of mischarged Ala-tRNA(Pro). The misacylated Cys-tRNA(Pro) is not edited by ProRS. In Helicobacter pylori (strain HPAG1), this protein is Proline--tRNA ligase.